The chain runs to 102 residues: Small ribosomal subunit protein bS20 (102 aa).

The protein belongs to the bacterial ribosomal protein bS20 family.

Its function is as follows. Binds directly to 16S ribosomal RNA. The sequence is that of Small ribosomal subunit protein bS20 from Gloeobacter violaceus (strain ATCC 29082 / PCC 7421).